Consider the following 249-residue polypeptide: Hydroxyacylglutathione hydrolase (249 aa).

7 residues coordinate Zn(2+): His53, His55, Asp57, His58, His110, Asp127, and His165.

It belongs to the metallo-beta-lactamase superfamily. Glyoxalase II family. In terms of assembly, monomer. The cofactor is Zn(2+).

It catalyses the reaction an S-(2-hydroxyacyl)glutathione + H2O = a 2-hydroxy carboxylate + glutathione + H(+). The protein operates within secondary metabolite metabolism; methylglyoxal degradation; (R)-lactate from methylglyoxal: step 2/2. Its function is as follows. Thiolesterase that catalyzes the hydrolysis of S-D-lactoyl-glutathione to form glutathione and D-lactic acid. This Hamiltonella defensa subsp. Acyrthosiphon pisum (strain 5AT) protein is Hydroxyacylglutathione hydrolase.